The primary structure comprises 199 residues: Thymidylate kinase (199 aa).

Gly-7–Thr-14 contributes to the ATP binding site.

It belongs to the thymidylate kinase family.

It carries out the reaction dTMP + ATP = dTDP + ADP. In terms of biological role, phosphorylation of dTMP to form dTDP in both de novo and salvage pathways of dTTP synthesis. This chain is Thymidylate kinase, found in Acinetobacter baumannii (strain ACICU).